A 429-amino-acid chain; its full sequence is 3-phosphoshikimate 1-carboxyvinyltransferase (429 aa).

Positions 22, 23, and 27 each coordinate 3-phosphoshikimate. Residue K22 participates in phosphoenolpyruvate binding. Phosphoenolpyruvate is bound by residues G94 and R122. S167, Q169, D315, and K342 together coordinate 3-phosphoshikimate. Q169 serves as a coordination point for phosphoenolpyruvate. D315 (proton acceptor) is an active-site residue. Phosphoenolpyruvate-binding residues include R346 and R388.

Belongs to the EPSP synthase family. As to quaternary structure, monomer.

Its subcellular location is the cytoplasm. The enzyme catalyses 3-phosphoshikimate + phosphoenolpyruvate = 5-O-(1-carboxyvinyl)-3-phosphoshikimate + phosphate. It participates in metabolic intermediate biosynthesis; chorismate biosynthesis; chorismate from D-erythrose 4-phosphate and phosphoenolpyruvate: step 6/7. Its function is as follows. Catalyzes the transfer of the enolpyruvyl moiety of phosphoenolpyruvate (PEP) to the 5-hydroxyl of shikimate-3-phosphate (S3P) to produce enolpyruvyl shikimate-3-phosphate and inorganic phosphate. The protein is 3-phosphoshikimate 1-carboxyvinyltransferase of Geotalea daltonii (strain DSM 22248 / JCM 15807 / FRC-32) (Geobacter daltonii).